We begin with the raw amino-acid sequence, 345 residues long: Uroporphyrinogen decarboxylase (345 aa).

Substrate contacts are provided by residues 28 to 32, Asp-77, Tyr-153, Ser-208, and His-322; that span reads RQAGR.

Belongs to the uroporphyrinogen decarboxylase family. Homodimer.

It is found in the cytoplasm. The catalysed reaction is uroporphyrinogen III + 4 H(+) = coproporphyrinogen III + 4 CO2. The protein operates within porphyrin-containing compound metabolism; protoporphyrin-IX biosynthesis; coproporphyrinogen-III from 5-aminolevulinate: step 4/4. Catalyzes the decarboxylation of four acetate groups of uroporphyrinogen-III to yield coproporphyrinogen-III. The sequence is that of Uroporphyrinogen decarboxylase from Solibacter usitatus (strain Ellin6076).